The primary structure comprises 2947 residues: 3'-5' exoribonuclease HELZ2 (2947 aa).

The C3H1-type 1 zinc finger occupies 85–114 (PMRYQVCHYYRPGLGCRRHWNRCTFARSPE). The segment at 167 to 187 (CFTCCPPCLCPVDPRGHCPKH) adopts a C2H2-type zinc-finger fold. The segment at 221-245 (YCMYVGRGVPCRHGASRCEYAHSAV) adopts a C3H1-type 2 zinc-finger fold. The C2H2-type; atypical zinc finger occupies 289–311 (CHACLVTCNSQEAFENHCSSLEH). In terms of domain architecture, UvrD-like helicase ATP-binding spans 769–1317 (VGLIAGRRPE…ELLDESQQVT (549 aa)). 790-797 (GPFGTGKT) contributes to the ATP binding site. The interaction with THRAP3 stretch occupies residues 809-1290 (QQPHTKVLIC…GGMSEEDSES (482 aa)). Positions 913–916 (DEAA) match the DEAA box motif. The tract at residues 1260-1292 (EDTASGNSASRDAAAEVSTLEGGMSEEDSESDF) is disordered. 4 short sequence motifs (LXXLL motif) span residues 1306 to 1310 (LKELL), 1348 to 1352 (LWKFL), 1403 to 1407 (LVQIL), and 2240 to 2244 (LEGLP). An Omega-N-methylarginine modification is found at Arg2381. Residues 2413–2947 (PEPCRGNWPR…RVQRKSALSS (535 aa)) form an interaction with THRAP3 region. A UvrD-like helicase ATP-binding 2 domain is found at 2449-2726 (LNQSQDRAVR…IMLDTQYRMH (278 aa)). Residue 2470-2477 (GPPGTGKT) participates in ATP binding. The LXXLL motif 5 motif lies at 2525-2529 (LGGLL).

Belongs to the DNA2/NAM7 helicase family. As to quaternary structure, interacts with PPARA (via DNA-binding domain) and PPARG; the interaction stimulates the transcriptional activity of PPARA and PPARG. Interacts with THRAP3; the interaction is direct and HELZ2 and THRAP3 synergistically enhance the transcriptional activity of PPARG. It is probably part of the peroxisome proliferator activated receptor alpha interacting complex (PRIC).

The protein resides in the cytoplasm. The enzyme catalyses Exonucleolytic cleavage in the 3'- to 5'-direction to yield nucleoside 5'-phosphates.. It catalyses the reaction ATP + H2O = ADP + phosphate + H(+). Can degrade highly structured RNAs through its concerted ATP-dependent RNA helicase and 3' to 5' exoribonuclease activities. Shows a strong preference for pyrimidine over purine residues for its nuclease activity. Acts as a transcriptional coactivator for a number of nuclear receptors including PPARA, PPARG, THRA, THRB and RXRA. This Mus musculus (Mouse) protein is 3'-5' exoribonuclease HELZ2 (Helz2).